The sequence spans 201 residues: MIGRLRGELVSKQPPFLLLDVQGVGYEIEAPLSTFYDLPEPGGQVTLHTHLHVREDAHVLYGFASESERALFRSLIKVTGVGAKMALAILSGMTASEFSRCVMDGDVASLVRLPGIGRKTAERLVVEMRDRLGSLPAAVTLTGGKPAAAAARAPDPVSDAVSALVSLGYKPQEASRLISAVEGEAERSEDLIRLALKATLK.

The interval 1 to 64 is domain I; it reads MIGRLRGELV…EDAHVLYGFA (64 aa). Residues 65 to 143 form a domain II region; it reads SESERALFRS…SLPAAVTLTG (79 aa). The tract at residues 144–153 is flexible linker; sequence GKPAAAAARA. The interval 153–201 is domain III; the sequence is APDPVSDAVSALVSLGYKPQEASRLISAVEGEAERSEDLIRLALKATLK.

The protein belongs to the RuvA family. As to quaternary structure, homotetramer. Forms an RuvA(8)-RuvB(12)-Holliday junction (HJ) complex. HJ DNA is sandwiched between 2 RuvA tetramers; dsDNA enters through RuvA and exits via RuvB. An RuvB hexamer assembles on each DNA strand where it exits the tetramer. Each RuvB hexamer is contacted by two RuvA subunits (via domain III) on 2 adjacent RuvB subunits; this complex drives branch migration. In the full resolvosome a probable DNA-RuvA(4)-RuvB(12)-RuvC(2) complex forms which resolves the HJ.

The protein localises to the cytoplasm. Functionally, the RuvA-RuvB-RuvC complex processes Holliday junction (HJ) DNA during genetic recombination and DNA repair, while the RuvA-RuvB complex plays an important role in the rescue of blocked DNA replication forks via replication fork reversal (RFR). RuvA specifically binds to HJ cruciform DNA, conferring on it an open structure. The RuvB hexamer acts as an ATP-dependent pump, pulling dsDNA into and through the RuvAB complex. HJ branch migration allows RuvC to scan DNA until it finds its consensus sequence, where it cleaves and resolves the cruciform DNA. This chain is Holliday junction branch migration complex subunit RuvA, found in Thioalkalivibrio sulfidiphilus (strain HL-EbGR7).